We begin with the raw amino-acid sequence, 466 residues long: Sucrose-6-phosphate hydrolase (466 aa).

Residues 38–41 (LMND), Q57, 100–101 (YS), 159–160 (RD), and E218 each bind substrate. D41 is an active-site residue.

This sequence belongs to the glycosyl hydrolase 32 family.

It is found in the cytoplasm. It carries out the reaction Hydrolysis of terminal non-reducing beta-D-fructofuranoside residues in beta-D-fructofuranosides.. The protein operates within glycan biosynthesis; sucrose metabolism. In terms of biological role, enables the bacterium to metabolize sucrose as a sole carbon source. This is Sucrose-6-phosphate hydrolase (scrB) from Salmonella typhimurium.